A 358-amino-acid chain; its full sequence is Na(+)/H(+) exchange regulatory cofactor NHE-RF1 (358 aa).

N-acetylserine is present on serine 2. A phosphoserine mark is found at serine 2 and serine 46. In terms of domain architecture, PDZ 1 spans 14–94 (LCCLEKGPNG…AVRLLVVDPE (81 aa)). The span at 114-132 (QEAPGQAEPPAAAEVQGAG) shows a compositional bias: low complexity. A disordered region spans residues 114–192 (QEAPGQAEPP…DPDSPAEASG (79 aa)). Over residues 135 to 152 (NEPREADKSHPEQRELRP) the composition is skewed to basic and acidic residues. A PDZ 2 domain is found at 154 to 234 (LCTMKKGPSG…ETKLLVVDRE (81 aa)). 5 positions are modified to phosphoserine: serine 162, serine 269, serine 280, serine 290, and serine 291. Residues 277–358 (ALESPRPALV…SKKNELFSNL (82 aa)) form a disordered region. The segment covering 288 to 306 (SASSDTSEELNSQDSPPKQ) has biased composition (polar residues). A Phosphothreonine modification is found at threonine 293. Residues serine 294, serine 299, and serine 302 each carry the phosphoserine modification. Residues 307–319 (DSTAPSSTSSSDP) show a composition bias toward low complexity. Over residues 348–358 (WSKKNELFSNL) the composition is skewed to basic and acidic residues.

In terms of assembly, homodimer, and heterodimer with NHERF2. Binds the N-termini of EZR, RDX and MSN. Binds the C-termini of PDGFRA, PDGFRB, ADRB2, NOS2 and CFTR. Binds ARHGAP17, EPI64, RACK1, OPRK1, GNAQ, CTNNB1 and PLCB3. Binds PDZK1. Interacts with CLCN3. Binds the C-terminus of PAG1. In resting T-cells, part of a PAG1-NHERF1-MSN complex which is disrupted upon TCR activation. Forms a complex with CFTR and SLC4A7. Forms a complex with SLC4A7 and ATP6V1B1. Interacts with TRPC4 (via the PDZ-binding domain). Directly interacts with HTR4. Interacts (via the PDZ 1 domain) with PODXL (via the C-terminal PDZ-binding motif DTHL); interaction is not detected in glomerular epithelium cells. Interacts (via the PDZ 1 domain) with PODXL (via the C-terminal PDZ-binding motif DTHL); the interaction take place early in the secretory pathway and is necessary for its apical membrane sorting. Interacts with SLC26A3. Interacts with MCC. Interacts with SLC34A1. Interacts (via the PDZ domains) with SLC26A6 isoform 4 and isoform 5. Interacts (via PDZ domains) with ACE2 (via PDZ-binding motif); the interaction may enhance ACE2 membrane residence. In terms of processing, phosphorylated on serine residues. As to expression, detected in liver, kidney, pancreas, prostate, spleen, small intestine and placenta, in particular in the syncytiotrophoblast.

It is found in the cytoplasm. It localises to the apical cell membrane. The protein resides in the endomembrane system. Its subcellular location is the cell projection. The protein localises to the filopodium. It is found in the ruffle. It localises to the microvillus. Scaffold protein that connects plasma membrane proteins with members of the ezrin/moesin/radixin family and thereby helps to link them to the actin cytoskeleton and to regulate their surface expression. Necessary for recycling of internalized ADRB2. Was first known to play a role in the regulation of the activity and subcellular location of SLC9A3. Necessary for cAMP-mediated phosphorylation and inhibition of SLC9A3. May enhance Wnt signaling. May participate in HTR4 targeting to microvilli. Involved in the regulation of phosphate reabsorption in the renal proximal tubules. Involved in sperm capacitation. May participate in the regulation of the chloride and bicarbonate homeostasis in spermatozoa. The sequence is that of Na(+)/H(+) exchange regulatory cofactor NHE-RF1 from Homo sapiens (Human).